The following is a 346-amino-acid chain: UDP-3-O-acylglucosamine N-acyltransferase (346 aa).

Histidine 240 functions as the Proton acceptor in the catalytic mechanism.

It belongs to the transferase hexapeptide repeat family. LpxD subfamily. In terms of assembly, homotrimer.

It catalyses the reaction a UDP-3-O-[(3R)-3-hydroxyacyl]-alpha-D-glucosamine + a (3R)-hydroxyacyl-[ACP] = a UDP-2-N,3-O-bis[(3R)-3-hydroxyacyl]-alpha-D-glucosamine + holo-[ACP] + H(+). It participates in bacterial outer membrane biogenesis; LPS lipid A biosynthesis. Functionally, catalyzes the N-acylation of UDP-3-O-acylglucosamine using 3-hydroxyacyl-ACP as the acyl donor. Is involved in the biosynthesis of lipid A, a phosphorylated glycolipid that anchors the lipopolysaccharide to the outer membrane of the cell. The protein is UDP-3-O-acylglucosamine N-acyltransferase of Phocaeicola vulgatus (strain ATCC 8482 / DSM 1447 / JCM 5826 / CCUG 4940 / NBRC 14291 / NCTC 11154) (Bacteroides vulgatus).